Reading from the N-terminus, the 123-residue chain is Large ribosomal subunit protein uL18 (123 aa).

This sequence belongs to the universal ribosomal protein uL18 family. In terms of assembly, part of the 50S ribosomal subunit; part of the 5S rRNA/L5/L18/L25 subcomplex. Contacts the 5S and 23S rRNAs.

This is one of the proteins that bind and probably mediate the attachment of the 5S RNA into the large ribosomal subunit, where it forms part of the central protuberance. The protein is Large ribosomal subunit protein uL18 of Protochlamydia amoebophila (strain UWE25).